The sequence spans 357 residues: DENN domain-containing protein 10 (357 aa).

In terms of domain architecture, uDENN spans 1–140 (MAAAEVADTQ…TKGICQSEEN (140 aa)). The 135-residue stretch at 165 to 299 (QFGMETVILH…PEKSESHVIQ (135 aa)) folds into the cDENN domain. The dDENN domain occupies 301-357 (IALKTREIFTNLAPFSEVSADGEKRVLNLEALKQKRFPPATENFLYHLAAAEQMLKI).

It belongs to the DENND10 family. Interacts with the coiled-coil heterodimer of CCDC22 and CCDC93; the interaction is direct. Interacts with RAB27A and RAB27B (GDP-bound forms preferentially).

The protein resides in the late endosome. Its function is as follows. Guanine nucleotide exchange factor (GEF) regulating homeostasis of late endocytic pathway, including endosomal positioning, maturation and secretion, possibly through activating Rab proteins such as RAB27A and RAB27B. Promotes the exchange of GDP to GTP, converting inactive GDP-bound RAB27A and RAB27B into their active GTP-bound form. The polypeptide is DENN domain-containing protein 10 (Homo sapiens (Human)).